A 327-amino-acid chain; its full sequence is tRNA dimethylallyltransferase (327 aa).

An ATP-binding site is contributed by 14-21; that stretch reads GPTASGKT. Position 16 to 21 (16 to 21) interacts with substrate; sequence TASGKT. 2 interaction with substrate tRNA regions span residues 39–42 and 163–167; these read DSAL and QRIQR.

The protein belongs to the IPP transferase family. Monomer. Requires Mg(2+) as cofactor.

The catalysed reaction is adenosine(37) in tRNA + dimethylallyl diphosphate = N(6)-dimethylallyladenosine(37) in tRNA + diphosphate. Its function is as follows. Catalyzes the transfer of a dimethylallyl group onto the adenine at position 37 in tRNAs that read codons beginning with uridine, leading to the formation of N6-(dimethylallyl)adenosine (i(6)A). The sequence is that of tRNA dimethylallyltransferase from Xanthomonas campestris pv. campestris (strain 8004).